Consider the following 547-residue polypeptide: Glucose-6-phosphate isomerase (547 aa).

Catalysis depends on E351, which acts as the Proton donor. Catalysis depends on residues H382 and K509.

This sequence belongs to the GPI family.

It localises to the cytoplasm. The enzyme catalyses alpha-D-glucose 6-phosphate = beta-D-fructose 6-phosphate. It participates in carbohydrate biosynthesis; gluconeogenesis. The protein operates within carbohydrate degradation; glycolysis; D-glyceraldehyde 3-phosphate and glycerone phosphate from D-glucose: step 2/4. Functionally, catalyzes the reversible isomerization of glucose-6-phosphate to fructose-6-phosphate. This Coxiella burnetii (strain CbuG_Q212) (Coxiella burnetii (strain Q212)) protein is Glucose-6-phosphate isomerase.